The chain runs to 149 residues: UPF0260 protein PSPPH_1551 (149 aa).

It belongs to the UPF0260 family.

In Pseudomonas savastanoi pv. phaseolicola (strain 1448A / Race 6) (Pseudomonas syringae pv. phaseolicola (strain 1448A / Race 6)), this protein is UPF0260 protein PSPPH_1551.